Here is a 327-residue protein sequence, read N- to C-terminus: Biotin synthase (327 aa).

The region spanning 49–273 (FNKDKIDLCS…ICIARIALPD (225 aa)) is the Radical SAM core domain. [4Fe-4S] cluster-binding residues include Cys-67, Cys-71, and Cys-74. 4 residues coordinate [2Fe-2S] cluster: Ser-110, Cys-142, Cys-201, and Arg-277.

This sequence belongs to the radical SAM superfamily. Biotin synthase family. Homodimer. Requires [4Fe-4S] cluster as cofactor. [2Fe-2S] cluster serves as cofactor.

It carries out the reaction (4R,5S)-dethiobiotin + (sulfur carrier)-SH + 2 reduced [2Fe-2S]-[ferredoxin] + 2 S-adenosyl-L-methionine = (sulfur carrier)-H + biotin + 2 5'-deoxyadenosine + 2 L-methionine + 2 oxidized [2Fe-2S]-[ferredoxin]. The protein operates within cofactor biosynthesis; biotin biosynthesis; biotin from 7,8-diaminononanoate: step 2/2. In terms of biological role, catalyzes the conversion of dethiobiotin (DTB) to biotin by the insertion of a sulfur atom into dethiobiotin via a radical-based mechanism. In Methanococcus maripaludis (strain C6 / ATCC BAA-1332), this protein is Biotin synthase.